Here is a 523-residue protein sequence, read N- to C-terminus: Endoglucanase 19 (523 aa).

The signal sequence occupies residues 1–52 (MCSWSLSSHTLTSPVRQAAMEPKSSSCGGAGIRLRLLVVLHLLLLVPSSAMA). The Nucleophile role is filled by aspartate 107. Asparagine 279 is a glycosylation site (N-linked (GlcNAc...) asparagine). Residues histidine 442, aspartate 493, and glutamate 502 contribute to the active site.

Belongs to the glycosyl hydrolase 9 (cellulase E) family.

The protein localises to the secreted. It catalyses the reaction Endohydrolysis of (1-&gt;4)-beta-D-glucosidic linkages in cellulose, lichenin and cereal beta-D-glucans.. This chain is Endoglucanase 19, found in Oryza sativa subsp. japonica (Rice).